Consider the following 1030-residue polypeptide: LPS-assembly protein LptD (1030 aa).

The first 32 residues, methionine 1 to alanine 32, serve as a signal peptide directing secretion. The interval valine 50–glutamine 213 is disordered. A compositionally biased stretch (polar residues) spans leucine 78 to serine 91. The segment covering threonine 126–alanine 137 has biased composition (acidic residues). Residues glycine 161–glutamate 171 are compositionally biased toward pro residues.

It belongs to the LptD family. As to quaternary structure, component of the lipopolysaccharide transport and assembly complex. Interacts with LptE and LptA.

It is found in the cell outer membrane. Functionally, together with LptE, is involved in the assembly of lipopolysaccharide (LPS) at the surface of the outer membrane. The sequence is that of LPS-assembly protein LptD from Methylococcus capsulatus (strain ATCC 33009 / NCIMB 11132 / Bath).